Here is a 113-residue protein sequence, read N- to C-terminus: Large ribosomal subunit protein uL24 (113 aa).

It belongs to the universal ribosomal protein uL24 family. In terms of assembly, part of the 50S ribosomal subunit.

Functionally, one of two assembly initiator proteins, it binds directly to the 5'-end of the 23S rRNA, where it nucleates assembly of the 50S subunit. In terms of biological role, one of the proteins that surrounds the polypeptide exit tunnel on the outside of the subunit. This Micrococcus luteus (strain ATCC 4698 / DSM 20030 / JCM 1464 / CCM 169 / CCUG 5858 / IAM 1056 / NBRC 3333 / NCIMB 9278 / NCTC 2665 / VKM Ac-2230) (Micrococcus lysodeikticus) protein is Large ribosomal subunit protein uL24.